The primary structure comprises 367 residues: DNA-directed RNA polymerase II subunit GRINL1A (367 aa).

Residues 15–40 (DLERRSLAELREMLKRQERLLRNEKF) adopt a coiled-coil conformation. The important for transcription repressor activity stretch occupies residues 29–68 (KRQERLLRNEKFICKLPDKGKKIFDSFAKLKAAIAECEEV). 3 stretches are compositionally biased toward polar residues: residues 117 to 131 (SVDN…QNQG), 176 to 185 (RVSSQAEDTS), and 205 to 225 (GEQQ…SGTQ). 3 disordered regions span residues 117–185 (SVDN…EDTS), 203–225 (DQGE…SGTQ), and 254–281 (PFRQ…RRDK). Residues 226 to 297 (KKPHYMEVLE…TAARLLPLHH (72 aa)) are interaction with Pol II. Serine 269 carries the post-translational modification Phosphoserine. An important for transcription repressor activity region spans residues 298–313 (MPTQLLSIEESLALQK). Residues 300-329 (TQLLSIEESLALQKQRKQKYEEMQAKLAAQ) adopt a coiled-coil conformation. The segment at 314–339 (QRKQKYEEMQAKLAAQKLAERLNIKM) is interaction with Pol II. Residues 335–367 (LNIKMRSYNPEGESSGRYREVRDEDDDWSSDEF) form a disordered region. Positions 357–367 (DEDDDWSSDEF) are enriched in acidic residues.

The protein belongs to the GRINL1 family. Component of the Pol II(G) complex, which contains the RNA polymerase II (Pol II) core complex subunits and POLR2M isoform 1. Pol II(G) appears to be an abundant form of Pol II. In terms of processing, dephosphorylated at Ser-269 by the PNUTS-PP1 complex, promoting RNA polymerase II transcription pause-release.

The protein localises to the nucleus. Appears to be a stable component of the Pol II(G) complex form of RNA polymerase II (Pol II). Pol II synthesizes mRNA precursors and many functional non-coding RNAs and is the central component of the basal RNA polymerase II transcription machinery. May play a role in the Mediator complex-dependent regulation of transcription activation. Acts as a negative regulator of transcriptional activation; this repression is relieved by the Mediator complex, which restores Pol II(G) activator-dependent transcription to a level equivalent to that of Pol II. This is DNA-directed RNA polymerase II subunit GRINL1A (POLR2M) from Pongo abelii (Sumatran orangutan).